The primary structure comprises 283 residues: Phosphate import ATP-binding protein PstB (283 aa).

A compositionally biased stretch (polar residues) spans 1–20; that stretch reads MAQTLAQTKQISQSHTFDVS. Residues 1-32 are disordered; it reads MAQTLAQTKQISQSHTFDVSQSHHKTPDDTNS. Positions 37 to 278 constitute an ABC transporter domain; that stretch reads YSTQNLDLWY…PSNKKTEDYI (242 aa). Position 69–76 (69–76) interacts with ATP; it reads GPSGCGKS.

Belongs to the ABC transporter superfamily. Phosphate importer (TC 3.A.1.7) family. The complex is composed of two ATP-binding proteins (PstB), two transmembrane proteins (PstC and PstA) and a solute-binding protein (PstS).

The protein resides in the cell membrane. The enzyme catalyses phosphate(out) + ATP + H2O = ADP + 2 phosphate(in) + H(+). Its function is as follows. Part of the ABC transporter complex PstSACB involved in phosphate import. Responsible for energy coupling to the transport system. The protein is Phosphate import ATP-binding protein PstB of Staphylococcus aureus (strain MRSA252).